Consider the following 180-residue polypeptide: Large ribosomal subunit protein uL5 (180 aa).

This sequence belongs to the universal ribosomal protein uL5 family. As to quaternary structure, part of the 50S ribosomal subunit; part of the 5S rRNA/L5/L18/L25 subcomplex. Contacts the 5S rRNA and the P site tRNA. Forms a bridge to the 30S subunit in the 70S ribosome.

Functionally, this is one of the proteins that bind and probably mediate the attachment of the 5S RNA into the large ribosomal subunit, where it forms part of the central protuberance. In the 70S ribosome it contacts protein S13 of the 30S subunit (bridge B1b), connecting the 2 subunits; this bridge is implicated in subunit movement. Contacts the P site tRNA; the 5S rRNA and some of its associated proteins might help stabilize positioning of ribosome-bound tRNAs. This is Large ribosomal subunit protein uL5 from Xanthomonas campestris pv. campestris (strain 8004).